Reading from the N-terminus, the 330-residue chain is G-protein coupled bile acid receptor 1 (330 aa).

Topologically, residues 1-19 (MTPNSTGEVPSPIPKGALG) are extracellular. An N-linked (GlcNAc...) asparagine glycan is attached at Asn4. A helical membrane pass occupies residues 20–40 (LSLALASLIITANLLLALGIA). The Cytoplasmic portion of the chain corresponds to 41 to 50 (WDRRLRSPPA). A helical transmembrane segment spans residues 51-71 (GCFFLSLLLAGLLTGLALPTL). Residues 72-85 (PGLWNQSRRGYWSC) are Extracellular-facing. N-linked (GlcNAc...) asparagine glycosylation is present at Asn76. Cys85 and Cys155 are joined by a disulfide. Residues 86–106 (LLVYLAPNFSFLSLLANLLLV) form a helical membrane-spanning segment. At 107 to 125 (HGERYMAVLRPLQPPGSIR) the chain is on the cytoplasmic side. The chain crosses the membrane as a helical span at residues 126–146 (LALLLTWAGPLLFASLPALGW). The Extracellular portion of the chain corresponds to 147 to 165 (NHWTPGANCSSQAIFPAPY). A helical membrane pass occupies residues 166-186 (LYLEVYGLLLPAVGAAAFLSV). Residues 187-228 (RVLATAHRQLQDICRLERAVCRDEPSALARALTWRQARAQAG) lie on the Cytoplasmic side of the membrane. The chain crosses the membrane as a helical span at residues 229–249 (AMLLFGLCWGPYVATLLLSVL). Residues 250–261 (AYEQRPPLGPGT) are Extracellular-facing. A helical membrane pass occupies residues 262–282 (LLSLLSLGSASAAAVPVAMGL). The Cytoplasmic portion of the chain corresponds to 283–330 (GDQRYTAPWRAAAQRCLQGLWGRASRDSPGPSIAYHPSSQSSVDLDLN). A disordered region spans residues 309–330 (DSPGPSIAYHPSSQSSVDLDLN). Residues 319 to 330 (PSSQSSVDLDLN) are compositionally biased toward polar residues.

The protein belongs to the G-protein coupled receptor 1 family. Ubiquitously expressed. Expressed at higher level in spleen and placenta. Expressed at lower level in other tissues. In digestive tissues, it is expressed in stomach, duodenum, ileocecum, ileum, jejunum, ascending colon, transverse colon, descending colon, cecum and liver, but not in esophagus and rectum.

Its subcellular location is the cell membrane. Functionally, receptor for bile acid. Bile acid-binding induces its internalization, activation of extracellular signal-regulated kinase and intracellular cAMP production. May be involved in the suppression of macrophage functions by bile acids. The polypeptide is G-protein coupled bile acid receptor 1 (GPBAR1) (Homo sapiens (Human)).